We begin with the raw amino-acid sequence, 273 residues long: Phosphatidylglycerol--prolipoprotein diacylglyceryl transferase (273 aa).

4 helical membrane passes run 18–38, 47–67, 89–109, and 116–136; these read IPVR…YVVG, LPED…IICA, IWNG…TAYI, and VSFL…QIIG. Arg137 contributes to the a 1,2-diacyl-sn-glycero-3-phospho-(1'-sn-glycerol) binding site. 3 helical membrane-spanning segments follow: residues 178–198, 207–227, and 238–258; these read VHPT…ILLI, GEIF…IEGM, and LRSA…AIIY.

This sequence belongs to the Lgt family.

It is found in the cell membrane. It catalyses the reaction L-cysteinyl-[prolipoprotein] + a 1,2-diacyl-sn-glycero-3-phospho-(1'-sn-glycerol) = an S-1,2-diacyl-sn-glyceryl-L-cysteinyl-[prolipoprotein] + sn-glycerol 1-phosphate + H(+). Its pathway is protein modification; lipoprotein biosynthesis (diacylglyceryl transfer). Its function is as follows. Catalyzes the transfer of the diacylglyceryl group from phosphatidylglycerol to the sulfhydryl group of the N-terminal cysteine of a prolipoprotein, the first step in the formation of mature lipoproteins. This chain is Phosphatidylglycerol--prolipoprotein diacylglyceryl transferase, found in Lysinibacillus sphaericus (strain C3-41).